The primary structure comprises 91 residues: Acylphosphatase (91 aa).

The Acylphosphatase-like domain occupies 6–91; the sequence is CMRCYISGRV…WKDYISFDVL (86 aa). Residues arginine 21 and asparagine 39 contribute to the active site.

The protein belongs to the acylphosphatase family.

The enzyme catalyses an acyl phosphate + H2O = a carboxylate + phosphate + H(+). The chain is Acylphosphatase (acyP) from Legionella pneumophila (strain Paris).